Here is a 399-residue protein sequence, read N- to C-terminus: Elongation factor Tu (399 aa).

The tr-type G domain maps to 10-204 (KPHVNIGTIG…AVDANIPEPE (195 aa)). The interval 19 to 26 (GHVDHGKT) is G1. 19–26 (GHVDHGKT) contributes to the GTP binding site. Mg(2+) is bound at residue Thr26. The interval 60-64 (GITIN) is G2. The G3 stretch occupies residues 81–84 (DCPG). Residues 81-85 (DCPGH) and 136-139 (NKCD) contribute to the GTP site. Residues 136–139 (NKCD) are G4. Residues 174–176 (SGL) form a G5 region.

Belongs to the TRAFAC class translation factor GTPase superfamily. Classic translation factor GTPase family. EF-Tu/EF-1A subfamily. As to quaternary structure, monomer.

It localises to the cytoplasm. It catalyses the reaction GTP + H2O = GDP + phosphate + H(+). Its function is as follows. GTP hydrolase that promotes the GTP-dependent binding of aminoacyl-tRNA to the A-site of ribosomes during protein biosynthesis. This Synechococcus sp. (strain WH7803) protein is Elongation factor Tu.